Here is a 782-residue protein sequence, read N- to C-terminus: Beta-mannosyltransferase 9 (782 aa).

The Cytoplasmic portion of the chain corresponds to 1-26; sequence MEKLIQSTISLFISLSLKISTKSYKS. Residues 27-47 traverse the membrane as a helical segment; sequence IISILFIISLLSIILTTTITV. Over 48–782 the chain is Extracellular; sequence YHDPERIITT…GKDKGKDKSN (735 aa). Residues 66–96 are disordered; the sequence is KSVFTASSPKQQDKLQQEIDQHQSDNSHEQQ. Positions 76-96 are enriched in basic and acidic residues; sequence QQDKLQQEIDQHQSDNSHEQQ. N-linked (GlcNAc...) asparagine glycans are attached at residues Asn445, Asn648, and Asn699.

The protein belongs to the BMT family.

The protein localises to the membrane. Functionally, beta-mannosyltransferase involved in cell wall biosynthesis through beta-1,2-mannosylation of cell wall phosphopeptidomannan. This Candida albicans (strain SC5314 / ATCC MYA-2876) (Yeast) protein is Beta-mannosyltransferase 9 (BMT9).